A 298-amino-acid chain; its full sequence is GTPase Era (298 aa).

Residues 3–170 (KSGFVAILGR…IKLLTDNLEE (168 aa)) enclose the Era-type G domain. Positions 11 to 18 (GRPNVGKS) are G1. GTP is bound at residue 11 to 18 (GRPNVGKS). The segment at 37 to 41 (QTTRN) is G2. Residues 58–61 (DTPG) form a G3 region. GTP-binding positions include 58-62 (DTPGI) and 120-123 (NKID). A G4 region spans residues 120–123 (NKID). The G5 stretch occupies residues 149 to 151 (ISA). In terms of domain architecture, KH type-2 spans 201–279 (TQQEVPHSVA…YLETWVKVKK (79 aa)).

Belongs to the TRAFAC class TrmE-Era-EngA-EngB-Septin-like GTPase superfamily. Era GTPase family. Monomer.

It is found in the cytoplasm. The protein resides in the cell membrane. Functionally, an essential GTPase that binds both GDP and GTP, with rapid nucleotide exchange. Plays a role in 16S rRNA processing and 30S ribosomal subunit biogenesis and possibly also in cell cycle regulation and energy metabolism. The protein is GTPase Era of Streptococcus pyogenes serotype M2 (strain MGAS10270).